Here is a 142-residue protein sequence, read N- to C-terminus: Large ribosomal subunit protein uL13 (142 aa).

It belongs to the universal ribosomal protein uL13 family. As to quaternary structure, part of the 50S ribosomal subunit.

In terms of biological role, this protein is one of the early assembly proteins of the 50S ribosomal subunit, although it is not seen to bind rRNA by itself. It is important during the early stages of 50S assembly. This chain is Large ribosomal subunit protein uL13, found in Histophilus somni (strain 2336) (Haemophilus somnus).